A 157-amino-acid chain; its full sequence is uncharacterized protein (157 aa).

The next 4 helical transmembrane spans lie at leucine 29–phenylalanine 49, valine 52–isoleucine 72, leucine 93–leucine 113, and asparagine 117–alanine 137.

The protein resides in the cell membrane. This is an uncharacterized protein from Bacillus subtilis (strain 168).